A 217-amino-acid polypeptide reads, in one-letter code: Probable GTP-binding protein EngB (217 aa).

One can recognise an EngB-type G domain in the interval 33–217; it reads GPAEIAFAGR…RITIEQAVAR (185 aa). GTP-binding positions include 41–48, 68–72, 95–98, 162–165, and 196–198; these read GRSNVGKS, GRTQE, DMPG, TKTD, and TSS. Serine 48 and threonine 70 together coordinate Mg(2+).

This sequence belongs to the TRAFAC class TrmE-Era-EngA-EngB-Septin-like GTPase superfamily. EngB GTPase family. Requires Mg(2+) as cofactor.

Necessary for normal cell division and for the maintenance of normal septation. In Sinorhizobium fredii (strain NBRC 101917 / NGR234), this protein is Probable GTP-binding protein EngB.